The primary structure comprises 155 residues: 6,7-dimethyl-8-ribityllumazine synthase (155 aa).

5-amino-6-(D-ribitylamino)uracil is bound by residues Phe24, 58-60 (AFE), and 82-84 (AII). 87–88 (ST) serves as a coordination point for (2S)-2-hydroxy-3-oxobutyl phosphate. Residue His90 is the Proton donor of the active site. Phe115 is a binding site for 5-amino-6-(D-ribitylamino)uracil. Arg129 provides a ligand contact to (2S)-2-hydroxy-3-oxobutyl phosphate.

Belongs to the DMRL synthase family.

It catalyses the reaction (2S)-2-hydroxy-3-oxobutyl phosphate + 5-amino-6-(D-ribitylamino)uracil = 6,7-dimethyl-8-(1-D-ribityl)lumazine + phosphate + 2 H2O + H(+). It participates in cofactor biosynthesis; riboflavin biosynthesis; riboflavin from 2-hydroxy-3-oxobutyl phosphate and 5-amino-6-(D-ribitylamino)uracil: step 1/2. Its function is as follows. Catalyzes the formation of 6,7-dimethyl-8-ribityllumazine by condensation of 5-amino-6-(D-ribitylamino)uracil with 3,4-dihydroxy-2-butanone 4-phosphate. This is the penultimate step in the biosynthesis of riboflavin. This Chlorobium phaeovibrioides (strain DSM 265 / 1930) (Prosthecochloris vibrioformis (strain DSM 265)) protein is 6,7-dimethyl-8-ribityllumazine synthase.